We begin with the raw amino-acid sequence, 134 residues long: ATP synthase epsilon chain, chloroplastic (134 aa).

It belongs to the ATPase epsilon chain family. As to quaternary structure, F-type ATPases have 2 components, CF(1) - the catalytic core - and CF(0) - the membrane proton channel. CF(1) has five subunits: alpha(3), beta(3), gamma(1), delta(1), epsilon(1). CF(0) has three main subunits: a, b and c.

It localises to the plastid. The protein resides in the chloroplast thylakoid membrane. In terms of biological role, produces ATP from ADP in the presence of a proton gradient across the membrane. This Drimys granadensis protein is ATP synthase epsilon chain, chloroplastic.